A 163-amino-acid polypeptide reads, in one-letter code: MSHLNIATLDASQHPYLPASSQTLFAAKAKKKLSFEEISQEIGRNEVATAAIFYGQAKASPEDITNLSKALDIPYELLEEQLSGFPDRGRSVEMPPREPLIYRLFEIVQNYGYAYKAVLNEKFGDGIMSAISFSTKVEKETDADGNNWAVITLRGKWLPFSRY.

Residues Arg103, Glu106, and Ser129 contribute to the active site.

Belongs to the cyanase family.

It catalyses the reaction cyanate + hydrogencarbonate + 3 H(+) = NH4(+) + 2 CO2. Catalyzes the reaction of cyanate with bicarbonate to produce ammonia and carbon dioxide. The sequence is that of Cyanate hydratase from Talaromyces marneffei (strain ATCC 18224 / CBS 334.59 / QM 7333) (Penicillium marneffei).